Here is a 446-residue protein sequence, read N- to C-terminus: Probable polyamine aminopropyl transferase (446 aa).

Positions 1–117 are unknown; that stretch reads MVEPAIGRNH…KRIACVVSAV (117 aa). The interval 64-94 is disordered; it reads GRGAERWHRSPRQANGRFSNQRYSSTSPNSS. The segment covering 75 to 94 has biased composition (polar residues); sequence RQANGRFSNQRYSSTSPNSS. In terms of domain architecture, PABS spans 116–351; it reads AVIFVATSCV…ELFAKKPGSG (236 aa). Residues 118–353 are spermidine synthase; the sequence is IFVATSCVSP…FAKKPGSGSE (236 aa). S-methyl-5'-thioadenosine-binding positions include asparagine 147, glutamate 226, and 251 to 252; that span reads DG. The active-site Proton acceptor is the aspartate 269.

This sequence belongs to the spermidine/spermine synthase family. In terms of assembly, homodimer or homotetramer.

It is found in the cytoplasm. The enzyme catalyses S-adenosyl 3-(methylsulfanyl)propylamine + putrescine = S-methyl-5'-thioadenosine + spermidine + H(+). It participates in amine and polyamine biosynthesis; spermidine biosynthesis; spermidine from putrescine: step 1/1. Catalyzes the irreversible transfer of a propylamine group from the amino donor S-adenosylmethioninamine (decarboxy-AdoMet) to putrescine (1,4-diaminobutane) to yield spermidine. In Bifidobacterium longum (strain NCC 2705), this protein is Probable polyamine aminopropyl transferase (speE).